The chain runs to 1259 residues: Ankyrin repeat and sterile alpha motif domain-containing protein 1B (1259 aa).

7 ANK repeats span residues 2–31 (GKDQ…GGIL), 58–87 (SGYT…STNV), 91–120 (KGYF…SHSR), 127–156 (ENET…DPTI), 160–189 (KLET…NLMS), 193–222 (RKHT…DVSC), and 225–254 (EKGS…DANI). The disordered stretch occupies residues 298-325 (HAQEDTAQETHLSSPAESPQKTKSETVT). Residues 306 to 325 (ETHLSSPAESPQKTKSETVT) show a composition bias toward polar residues. Phosphoserine is present on residues Ser310, Ser311, Ser315, Ser353, and Ser364. Disordered stretches follow at residues 367–401 (ELGK…SCGP), 490–513 (PGTS…SPDT), 556–614 (CTSF…GSSP), and 631–661 (TCED…EPSV). Over residues 371–384 (NGSQSVRTSSTINL) the composition is skewed to polar residues. Phosphothreonine is present on Thr503. Ser507 and Ser510 each carry phosphoserine. Residues 556 to 574 (CTSFTSSPAASPPTSSVET) show a composition bias toward low complexity. Basic and acidic residues predominate over residues 575-587 (TEVKNEGAEHADD). A Phosphoserine modification is found at Ser738. A disordered region spans residues 753–776 (VNWSKSSTAERSSKDNSERTPSFT). Thr772 is subject to Phosphothreonine. The residue at position 774 (Ser774) is a Phosphoserine. 2 consecutive SAM domains span residues 809-875 (CPVQ…LPKM) and 883-948 (YHPT…RLHD). At Tyr900 the chain carries Phosphotyrosine. Residue His934 is a short sequence motif, nuclear localization signal. The interval 943-988 (GDRLHDDPPQKPPRSITLREPSGNHTPPQLSPSLSQSTYTTGGSLD) is disordered. Low complexity predominate over residues 968 to 983 (TPPQLSPSLSQSTYTT). Phosphoserine is present on Ser973. Residue Tyr1006 is modified to Phosphotyrosine. Residues 1055–1212 (IFQSCDYKAF…SFENKPSKPI (158 aa)) enclose the PID domain. The segment at 1196–1216 (HSSTLPESFENKPSKPIPKPR) is disordered.

As to quaternary structure, interacts with EPHA8. Isoform 2 interacts with COIL.

The protein resides in the cytoplasm. The protein localises to the nucleus. Its subcellular location is the postsynaptic density. It is found in the cell projection. It localises to the dendritic spine. Isoform 2 may participate in the regulation of nucleoplasmic coilin protein interactions in neuronal and transformed cells. This is Ankyrin repeat and sterile alpha motif domain-containing protein 1B (Anks1b) from Mus musculus (Mouse).